Consider the following 273-residue polypeptide: 4-hydroxy-tetrahydrodipicolinate reductase (273 aa).

An NAD(+)-binding site is contributed by G12–M17. NADP(+) is bound at residue R39. NAD(+) contacts are provided by residues G102–T104 and A126–F129. The active-site Proton donor/acceptor is the H159. Residue H160 coordinates (S)-2,3,4,5-tetrahydrodipicolinate. K163 functions as the Proton donor in the catalytic mechanism. G169–T170 lines the (S)-2,3,4,5-tetrahydrodipicolinate pocket.

It belongs to the DapB family. As to quaternary structure, homotetramer.

The protein resides in the cytoplasm. It carries out the reaction (S)-2,3,4,5-tetrahydrodipicolinate + NAD(+) + H2O = (2S,4S)-4-hydroxy-2,3,4,5-tetrahydrodipicolinate + NADH + H(+). It catalyses the reaction (S)-2,3,4,5-tetrahydrodipicolinate + NADP(+) + H2O = (2S,4S)-4-hydroxy-2,3,4,5-tetrahydrodipicolinate + NADPH + H(+). It functions in the pathway amino-acid biosynthesis; L-lysine biosynthesis via DAP pathway; (S)-tetrahydrodipicolinate from L-aspartate: step 4/4. In terms of biological role, catalyzes the conversion of 4-hydroxy-tetrahydrodipicolinate (HTPA) to tetrahydrodipicolinate. This Erwinia tasmaniensis (strain DSM 17950 / CFBP 7177 / CIP 109463 / NCPPB 4357 / Et1/99) protein is 4-hydroxy-tetrahydrodipicolinate reductase.